Reading from the N-terminus, the 185-residue chain is Ribosome-recycling factor (185 aa).

Residues 138 to 160 (AMDKAVKDGEVGEDEGARGEKEL) form a disordered region.

This sequence belongs to the RRF family.

The protein resides in the cytoplasm. Responsible for the release of ribosomes from messenger RNA at the termination of protein biosynthesis. May increase the efficiency of translation by recycling ribosomes from one round of translation to another. The chain is Ribosome-recycling factor from Micrococcus luteus (strain ATCC 4698 / DSM 20030 / JCM 1464 / CCM 169 / CCUG 5858 / IAM 1056 / NBRC 3333 / NCIMB 9278 / NCTC 2665 / VKM Ac-2230) (Micrococcus lysodeikticus).